The sequence spans 187 residues: Protein TIFY 11b (187 aa).

The Tify domain occupies 68–103 (ATAPAAPLTIFYGGRMVVFEDFPADKAAEVMRMASS). A Jas motif is present at residues 121-145 (PIMRKASLQRFFAKRKDRLAATTPY). The Nuclear localization signal signature appears at 123-130 (MRKASLQR). The interval 139 to 168 (LAATTPYARPSPAETKASEPEEKKTPTSWL) is disordered. Over residues 154-163 (KASEPEEKKT) the composition is skewed to basic and acidic residues.

Belongs to the TIFY/JAZ family. As to quaternary structure, interacts with COI1B in a coronatine-dependent manner. Coronatine is an analog of jasmonoyl isoleucine (JA-Ile). Post-translationally, ubiquitinated. Targeted for degradation by the SCF(COI1) E3 ubiquitin ligase-proteasome pathway during jasmonate signaling.

The protein localises to the nucleus. In terms of biological role, repressor of jasmonate responses. This Oryza sativa subsp. japonica (Rice) protein is Protein TIFY 11b.